The sequence spans 529 residues: MNRRKTTSRGTSAAMKISHQPPRLLIVNIAVPSWVDICPNLCEALQNFFSIACSLMGPSRMSLFSLYTVQNQHECVLPFVQVRGNFIRLQACISELRMLQVEGCHRPPHALLPLAIEDGLQQFKQYSSHMASSAAQPWTSLEITVLTSRPGKEVVKELEEGLKDINLLSVRRLQVAEVTKGIQERSDSPSPTEEPSNDESSILEADIVLETLDNDVVSMEVFFKAWLHNSETDQENIHLLLTPQSLPPPSRAKDHPICLKCDLQERFLSPSLLPGTADGVSRIDDPKGDISTLYQMASLASASPYKLQVVKALKSSGICESLTYGLPFILRPTSCWQLDWDELETNQQHFHALCHCLLKRDWLLLARGEPLIHKHNQSLPACSFYVITPSHSLTLLVKLVATRELMLPGFFPLLSEDPPEDSLKIIESTLDSLDLGLTYNPLHVGSHLYSHLSSAHAKPQGRLYTSCASRGLRKGGQLQTNRVRAAVVPLPVAPAPRRALKMTAASKASSAAFLPSDSEEGEEERPSHT.

Disordered regions lie at residues lysine 180–serine 201 and alanine 504–threonine 529. Residues serine 188–serine 200 show a composition bias toward polar residues. At serine 516 the chain carries Phosphoserine.

Expressed in germ cells of the testis. Expressed from spermatogonia to spermatids. Expressed at very low levels in lung, stomach, thymus. Not detected in Sertoli cells.

The protein resides in the cytoplasm. Its function is as follows. Required for meiosis I progression during spermatogenesis. This Mus musculus (Mouse) protein is Meiosis 1 arrest protein (M1ap).